The sequence spans 329 residues: Biotin synthase (329 aa).

Residues 36-260 (GEIQLCTLLS…VAVARITMPK (225 aa)) enclose the Radical SAM core domain. Positions 51, 55, and 58 each coordinate [4Fe-4S] cluster. [2Fe-2S] cluster contacts are provided by Cys95, Cys126, Cys186, and Arg264.

It belongs to the radical SAM superfamily. Biotin synthase family. Homodimer. It depends on [4Fe-4S] cluster as a cofactor. Requires [2Fe-2S] cluster as cofactor.

The enzyme catalyses (4R,5S)-dethiobiotin + (sulfur carrier)-SH + 2 reduced [2Fe-2S]-[ferredoxin] + 2 S-adenosyl-L-methionine = (sulfur carrier)-H + biotin + 2 5'-deoxyadenosine + 2 L-methionine + 2 oxidized [2Fe-2S]-[ferredoxin]. It functions in the pathway cofactor biosynthesis; biotin biosynthesis; biotin from 7,8-diaminononanoate: step 2/2. Its function is as follows. Catalyzes the conversion of dethiobiotin (DTB) to biotin by the insertion of a sulfur atom into dethiobiotin via a radical-based mechanism. The sequence is that of Biotin synthase from Sphingopyxis alaskensis (strain DSM 13593 / LMG 18877 / RB2256) (Sphingomonas alaskensis).